Here is a 723-residue protein sequence, read N- to C-terminus: Catalase-peroxidase (723 aa).

Positions 98–226 (WHAAGSYRAA…LAAVQMGLIY (129 aa)) form a cross-link, tryptophyl-tyrosyl-methioninium (Trp-Tyr) (with M-252). His-99 (proton acceptor) is an active-site residue. Positions 226-252 (YVNPEGVNGKPDPLKTAAQVRETFARM) form a cross-link, tryptophyl-tyrosyl-methioninium (Tyr-Met) (with W-98). His-267 is a binding site for heme b. The segment at 267-286 (HTVGKTHGNGRAENLGPSPE) is disordered.

The protein belongs to the peroxidase family. Peroxidase/catalase subfamily. In terms of assembly, homodimer or homotetramer. It depends on heme b as a cofactor. In terms of processing, formation of the three residue Trp-Tyr-Met cross-link is important for the catalase, but not the peroxidase activity of the enzyme.

It catalyses the reaction H2O2 + AH2 = A + 2 H2O. It carries out the reaction 2 H2O2 = O2 + 2 H2O. Bifunctional enzyme with both catalase and broad-spectrum peroxidase activity. The protein is Catalase-peroxidase of Thioalkalivibrio sulfidiphilus (strain HL-EbGR7).